The primary structure comprises 326 residues: Transcription factor bHLH143 (326 aa).

The segment covering 175–189 has biased composition (acidic residues); it reads SDDDDNDDWESDDEV. 2 disordered regions span residues 175–194 and 234–275; these read SDDD…STGH and RDSS…EQSR. Over residues 255–271 the composition is skewed to polar residues; it reads PESNISSKQETGSGLSD. A bHLH domain is found at 263–312; the sequence is QETGSGLSDEQSRKDKIHTALRILESVVPGAKGKEALLLLDEAIDYLKLL.

Homodimer.

It localises to the nucleus. The polypeptide is Transcription factor bHLH143 (BHLH143) (Arabidopsis thaliana (Mouse-ear cress)).